The sequence spans 1295 residues: Serine protease sat autotransporter (1295 aa).

The first 49 residues, 1 to 49 (MNKIYSLKYSAATGGLIAVSELAKRVSGKTNRKLVATMLSLAVAGTVNA), serve as a signal peptide directing secretion. Positions 51 to 300 (NIDISNVWAR…TKYNDKLVSE (250 aa)) constitute a Peptidase S6 domain. Residues His-121, Asp-149, and Ser-256 each act as charge relay system in the active site. Residues 1029 to 1295 (DINGESGAWA…AINANFRYSF (267 aa)) form the Autotransporter domain.

In terms of processing, cleaved to release the mature protein from the outer membrane.

Its subcellular location is the periplasm. It localises to the secreted. It is found in the cell surface. The protein resides in the cell outer membrane. Its activity is regulated as follows. Inhibited by phenylmethylsulfonyl fluoride and Pefabloc. Its function is as follows. Shows serine protease activity and displays cytophatic activity, including elongation, rounding, and detachment of a proportion of the cells from monolayer in culture. Triggers vacuolation within the cytoplasm of the human bladder and kidney cells. The polypeptide is Serine protease sat autotransporter (sat) (Escherichia coli O6:H1 (strain CFT073 / ATCC 700928 / UPEC)).